The chain runs to 427 residues: Histidine--tRNA ligase (427 aa).

This sequence belongs to the class-II aminoacyl-tRNA synthetase family. As to quaternary structure, homodimer.

It localises to the cytoplasm. The enzyme catalyses tRNA(His) + L-histidine + ATP = L-histidyl-tRNA(His) + AMP + diphosphate + H(+). In Aster yellows witches'-broom phytoplasma (strain AYWB), this protein is Histidine--tRNA ligase.